Here is a 300-residue protein sequence, read N- to C-terminus: Urease accessory protein UreD (300 aa).

It belongs to the UreD family. As to quaternary structure, ureD, UreF and UreG form a complex that acts as a GTP-hydrolysis-dependent molecular chaperone, activating the urease apoprotein by helping to assemble the nickel containing metallocenter of UreC. The UreE protein probably delivers the nickel.

It is found in the cytoplasm. Its function is as follows. Required for maturation of urease via the functional incorporation of the urease nickel metallocenter. The chain is Urease accessory protein UreD from Prochlorococcus marinus (strain MIT 9312).